The sequence spans 130 residues: MAKDTRGRKKTARRSVSEGVAHIHASFNNTIVTITDRQGNALAWATSGGQGFRGSRKSTPFAAQVAAEVAGKAAQETYGVKNVDVLVKGPGPGRESAVRALGALGYKINSISDVTPIPHNGCRPPKKRRV.

It belongs to the universal ribosomal protein uS11 family. As to quaternary structure, part of the 30S ribosomal subunit. Interacts with proteins S7 and S18. Binds to IF-3.

Its function is as follows. Located on the platform of the 30S subunit, it bridges several disparate RNA helices of the 16S rRNA. Forms part of the Shine-Dalgarno cleft in the 70S ribosome. The protein is Small ribosomal subunit protein uS11 of Psychrobacter sp. (strain PRwf-1).